Consider the following 803-residue polypeptide: H(+)/Cl(-) exchange transporter 7 (803 aa).

The interval M1–Q46 is disordered. Topologically, residues M1–R124 are cytoplasmic. Residue S9 is modified to Phosphoserine. A run of 2 helical transmembrane segments spans residues W125 to I157 and F172 to I195. The Selectivity filter part_1 motif lies at G201–P205. S202 lines the chloride pocket. The helical intramembrane region spans I204–L211. Transmembrane regions (helical) follow at residues R221–G239 and E245–G262. Residues G243 to P247 carry the Selectivity filter part_2 motif. Intramembrane regions (helical) lie at residues F286–A298 and P302–L310. The next 5 membrane-spanning stretches (helical) occupy residues F320–V339, I373–R403, P408–I430, P485–L505, and G510–L533. A Selectivity filter part_3 motif is present at residues G510 to P514. F512 provides a ligand contact to chloride. The segment at residues G543–I557 is an intramembrane region (helical). The note=Loop between two helices intramembrane region spans V558–M560. The segment at residues T561–T572 is an intramembrane region (helical). Positions S573–T576 form an intramembrane region, note=Loop between two helices. A helical membrane pass occupies residues Y577–F595. Residues I596–T803 are Cytoplasmic-facing. Y600 contacts chloride. CBS domains follow at residues M629–E693 and M739–E797. ATP is bound by residues H656–G658 and T781–D784. Position 799 is a phosphoserine (S799).

This sequence belongs to the chloride channel (TC 2.A.49) family. ClC-7/CLCN7 subfamily. As to quaternary structure, chloride channel 7 are heteromers of alpha (CLCN7) and beta (OSTM1) subunits. In terms of tissue distribution, liver, spleen, kidneys and brain.

It localises to the lysosome membrane. It carries out the reaction 2 chloride(in) + H(+)(out) = 2 chloride(out) + H(+)(in). Its function is as follows. Slowly voltage-gated channel mediating the exchange of chloride ions against protons. Functions as antiporter and contributes to the acidification of the lysosome lumen and may be involved in maintaining lysosomal pH. The CLC channel family contains both chloride channels and proton-coupled anion transporters that exchange chloride or another anion for protons. The presence of conserved gating glutamate residues is typical for family members that function as antiporters. In Mus musculus (Mouse), this protein is H(+)/Cl(-) exchange transporter 7.